A 124-amino-acid polypeptide reads, in one-letter code: Probable dihydroneopterin aldolase (124 aa).

Substrate is bound by residues E23, Y56, and I75–E76. K103 acts as the Proton donor/acceptor in catalysis.

This sequence belongs to the DHNA family.

The enzyme catalyses 7,8-dihydroneopterin = 6-hydroxymethyl-7,8-dihydropterin + glycolaldehyde. It participates in cofactor biosynthesis; tetrahydrofolate biosynthesis; 2-amino-4-hydroxy-6-hydroxymethyl-7,8-dihydropteridine diphosphate from 7,8-dihydroneopterin triphosphate: step 3/4. In terms of biological role, catalyzes the conversion of 7,8-dihydroneopterin to 6-hydroxymethyl-7,8-dihydropterin. The polypeptide is Probable dihydroneopterin aldolase (folB) (Chlamydia trachomatis serovar D (strain ATCC VR-885 / DSM 19411 / UW-3/Cx)).